A 153-amino-acid polypeptide reads, in one-letter code: Small ribosomal subunit protein uS5 (153 aa).

An S5 DRBM domain is found at 15–78 (FQEVVVNIGR…DDAFKNLIHV (64 aa)).

The protein belongs to the universal ribosomal protein uS5 family. Part of the 30S ribosomal subunit. Contacts proteins S4 and S8.

Its function is as follows. With S4 and S12 plays an important role in translational accuracy. In terms of biological role, located at the back of the 30S subunit body where it stabilizes the conformation of the head with respect to the body. This Helicobacter pylori (strain P12) protein is Small ribosomal subunit protein uS5.